The following is a 233-amino-acid chain: Cysteine-rich venom protein (233 aa).

Positions 1–12 (PILAAVLQQSSG) are cleaved as a signal peptide. The 129-residue stretch at 31–159 (VDLHNSLRRS…PYSYFFVCQY (129 aa)) folds into the SCP domain. 8 disulfides stabilise this stretch: Cys68–Cys146, Cys85–Cys160, Cys141–Cys157, Cys179–Cys186, Cys182–Cys191, Cys195–Cys228, Cys204–Cys222, and Cys213–Cys226. The ShKT domain occupies 195-228 (CTRENKFTNCNTMVQQSSCQDNYMKTNCPASCFC).

It belongs to the CRISP family. Expressed by the venom gland.

The protein resides in the secreted. Its function is as follows. Blocks contraction of smooth muscle elicited by high potassium-induced depolarization, but does not block caffeine-stimulated contraction. May target voltage-gated calcium channels on smooth muscle. The polypeptide is Cysteine-rich venom protein (Trimeresurus stejnegeri (Chinese green tree viper)).